Consider the following 304-residue polypeptide: Meiotically up-regulated gene 86 protein (304 aa).

A compositionally biased stretch (low complexity) spans 1 to 12 (MSSNPSRSNSRS). The disordered stretch occupies residues 1–23 (MSSNPSRSNSRSKNGDLESGLKF). 6 consecutive transmembrane segments (helical) span residues 93–113 (PAPFGLSAFAFTTFLLSLFNV), 123–143 (MVTAPAAFYGGLAQLLASMWE), 150–170 (FGGAVFGSYGCFWLSYASIFI), 188–208 (AIGLYLICWFIFTFLVLLCTV), 212–232 (LAFFSLFMSLDVCFLLLACAF), and 247–267 (VGGAFGIFSACAAWYNAMAGL).

The protein belongs to the acetate uptake transporter (AceTr) (TC 2.A.96) family.

Its subcellular location is the endoplasmic reticulum membrane. The protein resides in the golgi apparatus. It is found in the golgi stack membrane. The protein localises to the vacuole membrane. Its function is as follows. Has a role in meiosis. This is Meiotically up-regulated gene 86 protein (mug86) from Schizosaccharomyces pombe (strain 972 / ATCC 24843) (Fission yeast).